Reading from the N-terminus, the 119-residue chain is Beta-2-microglobulin (119 aa).

An N-terminal signal peptide occupies residues 1–20 (MARLVVVALLVLLCLSGLEA). An Ig-like C1-type domain is found at 25 to 114 (PKIQVYSRHP…VTFTAPKTVK (90 aa)). The cysteines at positions 45 and 100 are disulfide-linked.

It belongs to the beta-2-microglobulin family. In terms of assembly, heterodimer of an alpha chain and a beta chain. Beta-2-microglobulin is the beta-chain of major histocompatibility complex class I molecules.

It is found in the secreted. Its function is as follows. Component of the class I major histocompatibility complex (MHC). Involved in the presentation of peptide antigens to the immune system. This is Beta-2-microglobulin (B2M) from Chiropotes satanas (Brown-bearded saki).